The primary structure comprises 514 residues: RNA-splicing ligase RtcB homolog (514 aa).

The Mn(2+) site is built by Asp128, Cys131, His236, His268, and His362. Residue 235-239 (NHYAE) coordinates GMP. Residues 362–363 (HN), 411–414 (GGTM), Ser418, 437–440 (HGAG), and Lys513 each bind GMP. Residue His437 is the GMP-histidine intermediate of the active site.

Belongs to the RtcB family. As to quaternary structure, catalytic component of the tRNA-splicing ligase complex. Mn(2+) serves as cofactor.

The enzyme catalyses a 3'-end 3'-phospho-ribonucleotide-RNA + a 5'-end dephospho-ribonucleoside-RNA + GTP = a ribonucleotidyl-ribonucleotide-RNA + GMP + diphosphate. The catalysed reaction is a 3'-end 2',3'-cyclophospho-ribonucleotide-RNA + a 5'-end dephospho-ribonucleoside-RNA + GTP + H2O = a ribonucleotidyl-ribonucleotide-RNA + GMP + diphosphate + H(+). In terms of biological role, catalytic subunit of the tRNA-splicing ligase complex that acts by directly joining spliced tRNA halves to mature-sized tRNAs by incorporating the precursor-derived splice junction phosphate into the mature tRNA as a canonical 3',5'-phosphodiester. May act as an RNA ligase with broad substrate specificity, and may function toward other RNAs. The polypeptide is RNA-splicing ligase RtcB homolog (Ostreococcus lucimarinus (strain CCE9901)).